The following is a 198-amino-acid chain: HTH-type transcriptional regulator BetI (198 aa).

The 61-residue stretch at 8 to 68 folds into the HTH tetR-type domain; the sequence is KIRRPQLVSA…ETMRDILRQL (61 aa). Residues 31–50 constitute a DNA-binding region (H-T-H motif); that stretch reads SVSLISQEAGVSSGIINHYF.

It functions in the pathway amine and polyamine biosynthesis; betaine biosynthesis via choline pathway [regulation]. Functionally, repressor involved in the biosynthesis of the osmoprotectant glycine betaine. It represses transcription of the choline transporter BetT and the genes of BetAB involved in the synthesis of glycine betaine. The protein is HTH-type transcriptional regulator BetI of Vibrio vulnificus (strain YJ016).